Reading from the N-terminus, the 1747-residue chain is Retroelement silencing factor 1 (1747 aa).

Residue lysine 216 forms a Glycyl lysine isopeptide (Lys-Gly) (interchain with G-Cter in SUMO2) linkage. Serine 221 is modified (phosphoserine). Residues 261–272 (TSAVPSQQYATQ) are compositionally biased toward polar residues. The interval 261 to 280 (TSAVPSQQYATQTDKRPPPP) is disordered. A Glycyl lysine isopeptide (Lys-Gly) (interchain with G-Cter in SUMO2) cross-link involves residue lysine 707. 3 disordered regions span residues 833–856 (PLTQ…NVNQ), 923–956 (PQKP…GFQK), and 1073–1101 (EGSV…KDPA). Residues 842-856 (ESTNGNSEVTPNVNQ) are compositionally biased toward polar residues. Residues 937–956 (REPEKQLDNTTENKDFGFQK) show a composition bias toward basic and acidic residues. Polar residues predominate over residues 1073–1087 (EGSVGQQTTYQTSED). Residues 1089–1101 (TADKTSSDSKDPA) are compositionally biased toward basic and acidic residues. A Glycyl lysine isopeptide (Lys-Gly) (interchain with G-Cter in SUMO2) cross-link involves residue lysine 1136. At serine 1145 the chain carries Phosphoserine. The tract at residues 1200-1274 (EEKQKEQCSP…KSLPRTEQEL (75 aa)) is disordered. A compositionally biased stretch (basic and acidic residues) spans 1217–1226 (QGERTSDRDV). Position 1240 is a phosphothreonine (threonine 1240). Residues 1242–1261 (PDGKSHFPELQDDSRKDTPK) are compositionally biased toward basic and acidic residues. At serine 1358 the chain carries Phosphoserine. Glycyl lysine isopeptide (Lys-Gly) (interchain with G-Cter in SUMO2) cross-links involve residues lysine 1528 and lysine 1636. The interval 1686 to 1716 (KRTQKDSQERDNVNSRLSKRSFSADGFEMLQ) is disordered. Over residues 1689–1698 (QKDSQERDNV) the composition is skewed to basic and acidic residues. Serine 1708 is modified (phosphoserine). A Glycyl lysine isopeptide (Lys-Gly) (interchain with G-Cter in SUMO2) cross-link involves residue lysine 1723. Position 1740 is a phosphoserine (serine 1740).

In terms of assembly, interacts with SETDB1.

Its subcellular location is the nucleus. In terms of biological role, plays a role in the regulation of imprinted gene expression, regulates repressive epigenetic modifications associated with SETDB1. Required for the recruitment or accumulation of SETDB1 to the endogenous retroviruses (ERVs) and maintenance of repressive chromatin configuration, contributing to a subset of the SETDB1-dependent ERV silencing in embryonic stem cells. The chain is Retroelement silencing factor 1 from Homo sapiens (Human).